The primary structure comprises 546 residues: Chaperonin GroEL 1 (546 aa).

ATP contacts are provided by residues 30 to 33 (TLGP), K51, 87 to 91 (DGTTT), G415, and D495. Residues 527–546 (DAAPTAAPGGPGAGGPGFDF) form a disordered region. The segment covering 535–546 (GGPGAGGPGFDF) has biased composition (gly residues).

It belongs to the chaperonin (HSP60) family. Forms a cylinder of 14 subunits composed of two heptameric rings stacked back-to-back. Interacts with the co-chaperonin GroES.

It is found in the cytoplasm. It carries out the reaction ATP + H2O + a folded polypeptide = ADP + phosphate + an unfolded polypeptide.. In terms of biological role, together with its co-chaperonin GroES, plays an essential role in assisting protein folding. The GroEL-GroES system forms a nano-cage that allows encapsulation of the non-native substrate proteins and provides a physical environment optimized to promote and accelerate protein folding. This chain is Chaperonin GroEL 1, found in Burkholderia lata (strain ATCC 17760 / DSM 23089 / LMG 22485 / NCIMB 9086 / R18194 / 383).